The following is a 587-amino-acid chain: Putative phagocytic receptor 1b (587 aa).

Positions 1–23 are cleaved as a signal peptide; it reads MRLQILLIYLICIIVSSIVLVES. The next 9 membrane-spanning stretches (helical) occupy residues 223-243, 294-314, 319-339, 354-374, 390-410, 448-468, 480-500, 524-544, and 556-576; these read LSVM…AIMI, IGWQ…FGMF, GGNM…ISGY, AWNI…VVIL, ILTM…LTVV, ILIA…YIFN, GILC…TVAL, VVFI…MYGL, and IVCF…SLIF.

This sequence belongs to the nonaspanin (TM9SF) (TC 9.A.2) family.

It is found in the membrane. Functionally, involved in adhesion and phagocytosis of hydrophilic particles. The chain is Putative phagocytic receptor 1b (phg1b) from Dictyostelium discoideum (Social amoeba).